The chain runs to 76 residues: Acyl carrier protein (76 aa).

The 75-residue stretch at 1-75 (MIFEKIKDLI…DIVFYITKNT (75 aa)) folds into the Carrier domain. Residue Ser-35 is modified to O-(pantetheine 4'-phosphoryl)serine.

The protein belongs to the acyl carrier protein (ACP) family. Post-translationally, 4'-phosphopantetheine is transferred from CoA to a specific serine of apo-ACP by AcpS. This modification is essential for activity because fatty acids are bound in thioester linkage to the sulfhydryl of the prosthetic group.

The protein resides in the cytoplasm. It participates in lipid metabolism; fatty acid biosynthesis. In terms of biological role, carrier of the growing fatty acid chain in fatty acid biosynthesis. This is Acyl carrier protein from Aster yellows witches'-broom phytoplasma (strain AYWB).